The sequence spans 940 residues: Isoleucine--tRNA ligase (940 aa).

Positions 58–68 match the 'HIGH' region motif; that stretch reads PYANGAIHIGH. Residue E564 coordinates L-isoleucyl-5'-AMP. The 'KMSKS' region signature appears at 605–609; it reads KMSKS. Position 608 (K608) interacts with ATP. The Zn(2+) site is built by C903, C906, C923, and C926.

The protein belongs to the class-I aminoacyl-tRNA synthetase family. IleS type 1 subfamily. In terms of assembly, monomer. It depends on Zn(2+) as a cofactor.

The protein localises to the cytoplasm. It catalyses the reaction tRNA(Ile) + L-isoleucine + ATP = L-isoleucyl-tRNA(Ile) + AMP + diphosphate. Catalyzes the attachment of isoleucine to tRNA(Ile). As IleRS can inadvertently accommodate and process structurally similar amino acids such as valine, to avoid such errors it has two additional distinct tRNA(Ile)-dependent editing activities. One activity is designated as 'pretransfer' editing and involves the hydrolysis of activated Val-AMP. The other activity is designated 'posttransfer' editing and involves deacylation of mischarged Val-tRNA(Ile). The polypeptide is Isoleucine--tRNA ligase (Nitrosococcus oceani (strain ATCC 19707 / BCRC 17464 / JCM 30415 / NCIMB 11848 / C-107)).